A 687-amino-acid polypeptide reads, in one-letter code: Fimbrin-5 (687 aa).

The region spanning 7-74 (VLVSDPWLQS…KSVLDKSYPN (68 aa)) is the EF-hand domain. 4 consecutive Calponin-homology (CH) domains span residues 122–239 (ESEK…KIQM), 267–370 (LAPE…QHRN), 392–498 (SREE…RYTM), and 513–621 (EITD…YWSL). Actin-binding regions lie at residues 122-370 (ESEK…QHRN) and 392-621 (SREE…YWSL). Residues 628–687 (ESTVSEDATDDGDANSVAGEISNLSIDGASESSPTVQDQELLTKADNDEDEVDGENNKDA) form a disordered region. Residues 649–667 (SNLSIDGASESSPTVQDQE) show a composition bias toward polar residues.

As to quaternary structure, interacts with F-actin. Expressed in mature pollen.

Its subcellular location is the cytoplasm. It is found in the cytoskeleton. Functionally, cross-links actin filaments (F-actin) in a calcium independent manner. Induces the formation of actin bundles. Stabilizes and prevents F-actin depolymerization mediated by latrunculin B (LatB). The polypeptide is Fimbrin-5 (Arabidopsis thaliana (Mouse-ear cress)).